A 128-amino-acid polypeptide reads, in one-letter code: uncharacterized protein (128 aa).

This is an uncharacterized protein from Enterobacteria phage T4 (Bacteriophage T4).